Reading from the N-terminus, the 258-residue chain is Pyridoxine 5'-phosphate synthase (258 aa).

Residue Asn6 coordinates 3-amino-2-oxopropyl phosphate. 8-9 (DH) is a binding site for 1-deoxy-D-xylulose 5-phosphate. Arg17 is a 3-amino-2-oxopropyl phosphate binding site. The Proton acceptor role is filled by His42. Arg44 and His49 together coordinate 1-deoxy-D-xylulose 5-phosphate. Glu69 (proton acceptor) is an active-site residue. 1-deoxy-D-xylulose 5-phosphate is bound at residue Thr99. The active-site Proton donor is His213. Residues Gly214 and 235–236 (GQ) each bind 3-amino-2-oxopropyl phosphate.

It belongs to the PNP synthase family. In terms of assembly, homooctamer; tetramer of dimers.

The protein resides in the cytoplasm. It catalyses the reaction 3-amino-2-oxopropyl phosphate + 1-deoxy-D-xylulose 5-phosphate = pyridoxine 5'-phosphate + phosphate + 2 H2O + H(+). Its pathway is cofactor biosynthesis; pyridoxine 5'-phosphate biosynthesis; pyridoxine 5'-phosphate from D-erythrose 4-phosphate: step 5/5. Functionally, catalyzes the complicated ring closure reaction between the two acyclic compounds 1-deoxy-D-xylulose-5-phosphate (DXP) and 3-amino-2-oxopropyl phosphate (1-amino-acetone-3-phosphate or AAP) to form pyridoxine 5'-phosphate (PNP) and inorganic phosphate. This is Pyridoxine 5'-phosphate synthase from Sulfurovum sp. (strain NBC37-1).